A 270-amino-acid polypeptide reads, in one-letter code: Acetylglutamate kinase (270 aa).

Substrate-binding positions include 41–42 (GG), Arg-63, and Asn-166.

It belongs to the acetylglutamate kinase family. ArgB subfamily.

The protein resides in the cytoplasm. The enzyme catalyses N-acetyl-L-glutamate + ATP = N-acetyl-L-glutamyl 5-phosphate + ADP. It participates in amino-acid biosynthesis; L-arginine biosynthesis; N(2)-acetyl-L-ornithine from L-glutamate: step 2/4. Catalyzes the ATP-dependent phosphorylation of N-acetyl-L-glutamate. The sequence is that of Acetylglutamate kinase from Anaeromyxobacter dehalogenans (strain 2CP-C).